A 150-amino-acid polypeptide reads, in one-letter code: Flagellar assembly factor FliW (150 aa).

It belongs to the FliW family. As to quaternary structure, interacts with translational regulator CsrA and flagellin(s).

Its subcellular location is the cytoplasm. In terms of biological role, acts as an anti-CsrA protein, binds CsrA and prevents it from repressing translation of its target genes, one of which is flagellin. Binds to flagellin and participates in the assembly of the flagellum. The protein is Flagellar assembly factor FliW of Leptospira interrogans serogroup Icterohaemorrhagiae serovar copenhageni (strain Fiocruz L1-130).